Here is a 491-residue protein sequence, read N- to C-terminus: Ketol-acid reductoisomerase (NADP(+)) (491 aa).

The 194-residue stretch at 15–208 (AQLGKCRFMA…GGHRAGVLES (194 aa)) folds into the KARI N-terminal Rossmann domain. NADP(+)-binding positions include 45-48 (CGAQ), Arg-68, Arg-76, Ser-78, and 108-110 (DKQ). His-132 is a catalytic residue. Gly-158 is a binding site for NADP(+). KARI C-terminal knotted domains lie at 209–344 (SFVA…TASQ) and 345–484 (FDGK…MKDM). Positions 217, 221, 389, and 393 each coordinate Mg(2+). Ser-414 lines the substrate pocket.

This sequence belongs to the ketol-acid reductoisomerase family. Requires Mg(2+) as cofactor.

It carries out the reaction (2R)-2,3-dihydroxy-3-methylbutanoate + NADP(+) = (2S)-2-acetolactate + NADPH + H(+). The catalysed reaction is (2R,3R)-2,3-dihydroxy-3-methylpentanoate + NADP(+) = (S)-2-ethyl-2-hydroxy-3-oxobutanoate + NADPH + H(+). The protein operates within amino-acid biosynthesis; L-isoleucine biosynthesis; L-isoleucine from 2-oxobutanoate: step 2/4. Its pathway is amino-acid biosynthesis; L-valine biosynthesis; L-valine from pyruvate: step 2/4. Involved in the biosynthesis of branched-chain amino acids (BCAA). Catalyzes an alkyl-migration followed by a ketol-acid reduction of (S)-2-acetolactate (S2AL) to yield (R)-2,3-dihydroxy-isovalerate. In the isomerase reaction, S2AL is rearranged via a Mg-dependent methyl migration to produce 3-hydroxy-3-methyl-2-ketobutyrate (HMKB). In the reductase reaction, this 2-ketoacid undergoes a metal-dependent reduction by NADPH to yield (R)-2,3-dihydroxy-isovalerate. In Enterobacter sp. (strain 638), this protein is Ketol-acid reductoisomerase (NADP(+)).